Here is a 384-residue protein sequence, read N- to C-terminus: Prostaglandin E synthase 2 (384 aa).

At 1 to 56 (MAQAARLSWVLVSSRCALTEGLLTRPWQPLSAQSRAGFTRVAAGSRGAAVRKGSPR) the chain is on the lumenal side. The chain crosses the membrane as a helical span at residues 57-73 (LLGAAALALGGALGLYH). At 74–384 (TVRWHQRSQD…VHHVNPSCKD (311 aa)) the chain is on the cytoplasmic side. The Glutaredoxin domain maps to 89-192 (SAAQLPLSNS…EVITYYPPMK (104 aa)). Residues Val147 and 163 to 164 (DS) contribute to the glutathione site. The GST C-terminal domain occupies 262-376 (YIVREGKFGA…RAIEEAPSVH (115 aa)).

The protein belongs to the GST superfamily. In terms of assembly, homodimer. Interacts with EXOSC10. May interact with CEBPB. Post-translationally, synthesized as a Golgi membrane-associated protein, and the proteolytic removal of the N-terminal hydrophobic domain leads to the formation of a mature cytosolic enzyme. As to expression, widely expressed. Expressed in brain, heart, liver, colon and lung.

It is found in the golgi apparatus membrane. It localises to the nucleus. Its subcellular location is the cytoplasm. The enzyme catalyses prostaglandin H2 = prostaglandin E2. It carries out the reaction prostaglandin H2 = (12S)-hydroxy-(5Z,8E,10E)-heptadecatrienoate + malonaldehyde. It participates in lipid metabolism; prostaglandin biosynthesis. Its activity is regulated as follows. Isomerase activity is increased by sulfhydril compounds. Dithiothreitol (DTT) is most effective, followed by glutathione (GSH) and 2-mercaptoethanol. Its function is as follows. Isomerase that catalyzes the conversion of PGH2 into the more stable prostaglandin E2 (PGE2) (in vitro). The biological function and the GSH-dependent property of PTGES2 is still under debate. In vivo, PTGES2 could form a complex with GSH and heme and would not participate in PGE2 synthesis but would catalyze the degradation of prostaglandin E2 H2 (PGH2) to 12(S)-hydroxy-5(Z),8(E),10(E)-heptadecatrienoic acid (HHT) and malondialdehyde (MDA). May also have transactivation activity toward IFN-gamma (IFNG), possibly via an interaction with CEBPB; however, the relevance of transcription activation activity remains unclear. The polypeptide is Prostaglandin E synthase 2 (Ptges2) (Mus musculus (Mouse)).